Reading from the N-terminus, the 140-residue chain is Large-conductance mechanosensitive channel 2 (140 aa).

3 helical membrane passes run 8–28 (FISK…AAFG), 30–50 (IVDS…FGGL), and 81–101 (GSFI…FLMV).

This sequence belongs to the MscL family. In terms of assembly, homopentamer.

The protein localises to the cell inner membrane. In terms of biological role, channel that opens in response to stretch forces in the membrane lipid bilayer. May participate in the regulation of osmotic pressure changes within the cell. This Mesorhizobium japonicum (strain LMG 29417 / CECT 9101 / MAFF 303099) (Mesorhizobium loti (strain MAFF 303099)) protein is Large-conductance mechanosensitive channel 2.